Reading from the N-terminus, the 85-residue chain is Probable Thioredoxin (85 aa).

In terms of domain architecture, Glutaredoxin spans 2-85; that stretch reads VVNIEVFTSP…LFEAINDEME (84 aa). A disulfide bond links Cys13 and Cys16.

It belongs to the glutaredoxin family.

Its subcellular location is the cytoplasm. Functionally, acts to maintain redox homeostasis; functions as a protein disulfide reductase. The protein is Probable Thioredoxin of Methanothermobacter thermautotrophicus (strain ATCC 29096 / DSM 1053 / JCM 10044 / NBRC 100330 / Delta H) (Methanobacterium thermoautotrophicum).